Consider the following 185-residue polypeptide: Peptidyl-tRNA hydrolase (185 aa).

Tyr-15 contacts tRNA. His-20 (proton acceptor) is an active-site residue. Tyr-64, Asn-66, and Asn-112 together coordinate tRNA.

It belongs to the PTH family. In terms of assembly, monomer.

The protein resides in the cytoplasm. The catalysed reaction is an N-acyl-L-alpha-aminoacyl-tRNA + H2O = an N-acyl-L-amino acid + a tRNA + H(+). Its function is as follows. Hydrolyzes ribosome-free peptidyl-tRNAs (with 1 or more amino acids incorporated), which drop off the ribosome during protein synthesis, or as a result of ribosome stalling. Functionally, catalyzes the release of premature peptidyl moieties from peptidyl-tRNA molecules trapped in stalled 50S ribosomal subunits, and thus maintains levels of free tRNAs and 50S ribosomes. This is Peptidyl-tRNA hydrolase from Porphyromonas gingivalis (strain ATCC BAA-308 / W83).